The primary structure comprises 1153 residues: Nitric oxide synthase, inducible (1153 aa).

The DINNN-motif; mediates interaction with SPSB1, SPSB2 and SPSB4 signature appears at 23 to 27 (DINNN). Positions 110 and 115 each coordinate Zn(2+). Serine 118 lines the (6R)-L-erythro-5,6,7,8-tetrahydrobiopterin pocket. Cysteine 200 provides a ligand contact to heme b. Serine 234 carries the post-translational modification Phosphoserine; by PKA. Residues glutamine 263, tryptophan 372, tyrosine 373, and glutamate 377 each contribute to the L-arginine site. Residues arginine 381, isoleucine 462, tryptophan 463, and phenylalanine 476 each coordinate (6R)-L-erythro-5,6,7,8-tetrahydrobiopterin. Tyrosine 491 provides a ligand contact to heme b. The calmodulin-binding stretch occupies residues 515 to 535 (LKVLVKAVLFACMLMRKTMAS). Positions 539 to 677 (VTILFATETG…AFRSWAVQTF (139 aa)) constitute a Flavodoxin-like domain. 5 residues coordinate FMN: threonine 545, glutamate 546, threonine 547, lysine 549, and serine 550. Tyrosine 575 carries the phosphotyrosine modification. Serine 578 bears the Phosphoserine; by PKA mark. FMN contacts are provided by serine 591, threonine 592, serine 628, arginine 633, cysteine 635, glutamate 661, and glutamine 665. The 241-residue stretch at 730–970 (KNVFTMRLKS…VRNASGFHLP (241 aa)) folds into the FAD-binding FR-type domain. Arginine 750 contributes to the NADP(+) binding site. Histidine 772 lines the FAD pocket. Phosphoserine; by PKA is present on serine 892. FAD contacts are provided by arginine 906, tyrosine 908, serine 909, threonine 924, and alanine 926. Position 929 (threonine 929) interacts with NADP(+). FAD is bound by residues tyrosine 930, valine 943, cysteine 944, and serine 945. 8 residues coordinate NADP(+): threonine 984, arginine 1017, serine 1046, arginine 1047, lysine 1053, tyrosine 1055, glutamine 1057, and aspartate 1090.

The protein belongs to the NOS family. Homodimer. Interacts with NHERF1. Interacts with GAPDH; induced by oxidatively-modified low-densitity lipoprotein (LDL(ox)). Interacts with S100A8 and S100A9 to form the iNOS-S100A8/9 transnitrosylase complex. Interacts with SPSB1, SPSB2 and SPSB4. Interacts with ELOC and CUL5 in the presence of SPSB1 or SPSB2 or SPSB4. Forms a complex with ASL, ASS1 and HSP90AA1; the complex regulates cell-autonomous L-arginine synthesis and citrulline recycling while channeling extracellular L-arginine to nitric oxide synthesis pathway. Heme b is required as a cofactor. The cofactor is FAD. FMN serves as cofactor. It depends on (6R)-L-erythro-5,6,7,8-tetrahydrobiopterin as a cofactor. Post-translationally, polyubiquitinated; mediated by SPSB1, SPSB2 and SPSB4, leading to proteasomal degradation. As to expression, expressed in the liver, retina, bone cells and airway epithelial cells of the lung. Not expressed in the platelets. Expressed in chondrocytes.

It is found in the cytoplasm. It localises to the cytosol. The enzyme catalyses 2 L-arginine + 3 NADPH + 4 O2 + H(+) = 2 L-citrulline + 2 nitric oxide + 3 NADP(+) + 4 H2O. With respect to regulation, regulated by calcium/calmodulin. Aspirin inhibits expression and function of this enzyme and effects may be exerted at the level of translational/post-translational modification and directly on the catalytic activity. In terms of biological role, produces nitric oxide (NO) which is a messenger molecule with diverse functions throughout the body. In macrophages, NO mediates tumoricidal and bactericidal actions. Also has nitrosylase activity and mediates cysteine S-nitrosylation of cytoplasmic target proteins such PTGS2/COX2. As component of the iNOS-S100A8/9 transnitrosylase complex involved in the selective inflammatory stimulus-dependent S-nitrosylation of GAPDH on 'Cys-247' implicated in regulation of the GAIT complex activity and probably multiple targets including ANXA5, EZR, MSN and VIM. Involved in inflammation, enhances the synthesis of pro-inflammatory mediators such as IL6 and IL8. The polypeptide is Nitric oxide synthase, inducible (Homo sapiens (Human)).